The chain runs to 21 residues: Bombinin-H4 (21 aa).

I2 is modified (D-allo-isoleucine). Position 20 is an isoleucine amide (I20).

The protein belongs to the bombinin family. As to expression, expressed by the skin glands.

It is found in the secreted. Has antimicrobial and hemolytic activities. This is Bombinin-H4 from Bombina variegata (Yellow-bellied toad).